Consider the following 663-residue polypeptide: Drug sensory protein A (663 aa).

Helical transmembrane passes span 32 to 52 (LMAA…FWAV), 165 to 185 (VFIP…GINP), and 199 to 219 (VTIA…VFNA). In terms of domain architecture, HAMP spans 220–272 (LTITQPIKELLLGVKNIAAGNFKQRITLPFGGELGELIVNFNEMAERLERYEA). One can recognise a PAS domain in the interval 281-351 (EKAKLDTLVS…QPLRELAADQ (71 aa)). The Histidine kinase domain maps to 429 to 656 (NVSHELRTPL…TFWFDLAVYQ (228 aa)). Position 432 is a phosphohistidine; by autocatalysis (histidine 432).

It is found in the cell membrane. The catalysed reaction is ATP + protein L-histidine = ADP + protein N-phospho-L-histidine.. This chain is Drug sensory protein A (dspA), found in Synechocystis sp. (strain ATCC 27184 / PCC 6803 / Kazusa).